We begin with the raw amino-acid sequence, 197 residues long: UPF0251 protein CT1277 (197 aa).

The tract at residues 138–197 (GGGFGGGRRGGGKCRGFRSGLDRGPGHGEGRCQGEGHGNGNGNGNGQGRMRRNQQEGGEV) is disordered. Basic and acidic residues predominate over residues 157–171 (GLDRGPGHGEGRCQG). The span at 172 to 184 (EGHGNGNGNGNGQ) shows a compositional bias: gly residues.

It belongs to the UPF0251 family.

This Chlorobaculum tepidum (strain ATCC 49652 / DSM 12025 / NBRC 103806 / TLS) (Chlorobium tepidum) protein is UPF0251 protein CT1277.